Here is a 734-residue protein sequence, read N- to C-terminus: Photosystem I P700 chlorophyll a apoprotein A2 (734 aa).

The next 8 membrane-spanning stretches (helical) occupy residues 46–69, 135–158, 175–199, 273–291, 330–353, 369–395, 417–439, and 517–535; these read IFAS…FHVA, LYNG…LHLQ, LNHH…HVAI, IAHH…GHMY, LHFQ…QHMY, AALY…IFFI, AIIS…LYVH, and FLVH…LILV. The [4Fe-4S] cluster site is built by cysteine 559 and cysteine 568. 2 consecutive transmembrane segments (helical) span residues 575–596 and 643–665; these read AFYL…YWHW and LSVW…MFLI. Residues histidine 654, methionine 662, and tyrosine 670 each contribute to the chlorophyll a site. Tryptophan 671 provides a ligand contact to phylloquinone. Residues 707–727 traverse the membrane as a helical segment; that stretch reads LVGLAHFSVGYIFTYAAFLIA.

This sequence belongs to the PsaA/PsaB family. As to quaternary structure, the PsaA/B heterodimer binds the P700 chlorophyll special pair and subsequent electron acceptors. PSI consists of a core antenna complex that captures photons, and an electron transfer chain that converts photonic excitation into a charge separation. The eukaryotic PSI reaction center is composed of at least 11 subunits. The cofactor is P700 is a chlorophyll a/chlorophyll a' dimer, A0 is one or more chlorophyll a, A1 is one or both phylloquinones and FX is a shared 4Fe-4S iron-sulfur center..

Its subcellular location is the plastid. The protein localises to the chloroplast thylakoid membrane. The catalysed reaction is reduced [plastocyanin] + hnu + oxidized [2Fe-2S]-[ferredoxin] = oxidized [plastocyanin] + reduced [2Fe-2S]-[ferredoxin]. Its function is as follows. PsaA and PsaB bind P700, the primary electron donor of photosystem I (PSI), as well as the electron acceptors A0, A1 and FX. PSI is a plastocyanin-ferredoxin oxidoreductase, converting photonic excitation into a charge separation, which transfers an electron from the donor P700 chlorophyll pair to the spectroscopically characterized acceptors A0, A1, FX, FA and FB in turn. Oxidized P700 is reduced on the lumenal side of the thylakoid membrane by plastocyanin. This chain is Photosystem I P700 chlorophyll a apoprotein A2, found in Marchantia polymorpha (Common liverwort).